A 551-amino-acid chain; its full sequence is Steroid transmembrane transporter SLC22A24 (551 aa).

Helical transmembrane passes span 16–36 (FQIL…PHTV), 146–166 (SVAK…GGHL), 174–194 (FIVT…AFAP), 204–222 (FLTG…LLIL), 235–255 (ALIF…AFGI), 260–280 (HLQL…RWLS), 350–370 (ICLL…LLIN), 378–398 (VFLL…LGNF), 410–430 (IIFM…TQEM), 435–455 (LVLA…TAVL), 469–489 (LGVI…LMIL), and 496–516 (LPWI…LLLP). The disordered stretch occupies residues 524–551 (PDSIQDVENKRKSSREVKKDAVAKVTPF). A compositionally biased stretch (basic and acidic residues) spans 530–545 (VENKRKSSREVKKDAV).

Localized to the kidney. Mainly expressed in the late segments of proximal tubules.

It is found in the cell membrane. The enzyme catalyses estrone 3-sulfate(out) + glutarate(in) = estrone 3-sulfate(in) + glutarate(out). The catalysed reaction is 17beta-estradiol 17-O-(beta-D-glucuronate)(out) + glutarate(in) = 17beta-estradiol 17-O-(beta-D-glucuronate)(in) + glutarate(out). It carries out the reaction dehydroepiandrosterone 3-sulfate(out) + glutarate(in) = dehydroepiandrosterone 3-sulfate(in) + glutarate(out). Functionally, renal transmembrane organic anion/dicarboxylate exchanger that participates in the reabsorption of conjugated steroids, as well as bile acids, driven by an outward gradient of dicarboxylates such as glutarate or succinate. Transports estrone 3-sulfate and estradiol-17-glucuronide (17beta-estradiol 17-O-(beta-D-glucuronate)), but not androstanediol glucuronide (5alpha-androstane-3alpha,17beta-diol 3-O-(beta-D-glucuronate)), nor taurocholate. Prefers sulfate conjugates of steroids rather than glucuronide conjugates. This chain is Steroid transmembrane transporter SLC22A24, found in Rattus norvegicus (Rat).